Reading from the N-terminus, the 396-residue chain is Transcription factor E2FC (396 aa).

The segment covering 34–48 (PRYSSLTPSSTNRPF) has biased composition (polar residues). The tract at residues 34–57 (PRYSSLTPSSTNRPFSVSQSLPNS) is disordered. The DNA-binding element occupies 155–220 (RYDSSLGLLT…TTKNHIRWKG (66 aa)). A coiled-coil region spans residues 226–268 (QKDLGDQISRLKSEVESMQSEESRLDDLIRERQEALRSLEEDD). The segment at 236 to 264 (LKSEVESMQSEESRLDDLIRERQEALRSL) is leucine-zipper. The interval 376-391 (DYWFESDAEVSLTDLW) is retinoblastoma protein binding.

This sequence belongs to the E2F/DP family. As to quaternary structure, heterodimer with DP proteins. Interacts preferentially with DPB, but also with DPA. No interaction with DPB when phosphorylated. Interacts with SKP2A, CDKA-1 and maize retinoblastoma-related protein RBR1. Component of a DREAM-like complex which modulates a variety of developmentally regulated genes and of the mitotic genes in proliferating and differentiated cells. Interacts with MYB3R3 at later stages of leaves development. Phosphorylated by cyclin-dependent kinase. Phosphorylation is necessary to target E2FC for proteolysis. As to expression, expressed in meristematic areas, vascular tissues, apical part of the roots, cotyledons, upper region of the hypocotyls, trichomes, young flower buds and pollen grains.

The protein resides in the cytoplasm. Functionally, involved in transcriptional repression. May act by repressing E2F-regulated genes in mature differentiated cells, but is not an antagonist of E2FA. Restricts cell division and is involved in the coordination between cell proliferation and endoreduplication during development. May play a role during the transition from skotomorphogenesis to photomorphogenesis. Regulated by phosphorylation-dependent proteolysis via the protein-ubiquitin ligase SCF(SKP2A) complex. The sequence is that of Transcription factor E2FC (E2FC) from Arabidopsis thaliana (Mouse-ear cress).